Here is a 260-residue protein sequence, read N- to C-terminus: Ribosomal RNA small subunit methyltransferase G (260 aa).

Residues G94, F99, 117 to 119 (DST), 145 to 146 (AE), and R164 each bind S-adenosyl-L-methionine. The tract at residues 236-260 (APTPPPYPRSPGTPKRQPLGQSNRP) is disordered. Residues 237 to 246 (PTPPPYPRSP) show a composition bias toward pro residues.

It belongs to the methyltransferase superfamily. RNA methyltransferase RsmG family.

The protein resides in the cytoplasm. Its function is as follows. Specifically methylates the N7 position of a guanine in 16S rRNA. The protein is Ribosomal RNA small subunit methyltransferase G of Synechococcus sp. (strain JA-2-3B'a(2-13)) (Cyanobacteria bacterium Yellowstone B-Prime).